A 194-amino-acid polypeptide reads, in one-letter code: Peptidyl-tRNA hydrolase (194 aa).

Tyrosine 17 serves as a coordination point for tRNA. The Proton acceptor role is filled by histidine 22. Residues phenylalanine 68, asparagine 70, and asparagine 116 each coordinate tRNA.

This sequence belongs to the PTH family. As to quaternary structure, monomer.

It localises to the cytoplasm. The enzyme catalyses an N-acyl-L-alpha-aminoacyl-tRNA + H2O = an N-acyl-L-amino acid + a tRNA + H(+). Functionally, hydrolyzes ribosome-free peptidyl-tRNAs (with 1 or more amino acids incorporated), which drop off the ribosome during protein synthesis, or as a result of ribosome stalling. Its function is as follows. Catalyzes the release of premature peptidyl moieties from peptidyl-tRNA molecules trapped in stalled 50S ribosomal subunits, and thus maintains levels of free tRNAs and 50S ribosomes. This chain is Peptidyl-tRNA hydrolase, found in Shewanella halifaxensis (strain HAW-EB4).